Here is a 390-residue protein sequence, read N- to C-terminus: Pyruvate dehydrogenase E1 component subunit alpha, somatic form, mitochondrial (390 aa).

Residues 1 to 29 (MRKMLAAVSRVLSGVAQKPASRVLVASRH) constitute a mitochondrion transit peptide. Lysine 63 is modified (N6-acetyllysine; alternate). At lysine 63 the chain carries N6-succinyllysine; alternate. The pyruvate site is built by histidine 92, tyrosine 118, arginine 119, alanine 157, glycine 165, valine 167, aspartate 196, glycine 197, alanine 198, asparagine 225, and tyrosine 227. Residues tyrosine 118 and arginine 119 each coordinate thiamine diphosphate. Residues glycine 165, valine 167, aspartate 196, glycine 197, alanine 198, and asparagine 225 each coordinate thiamine diphosphate. Aspartate 196 provides a ligand contact to Mg(2+). The Mg(2+) site is built by asparagine 225 and tyrosine 227. Serine 232 is modified (phosphoserine; by PDK1). Residue lysine 244 is modified to N6-acetyllysine; alternate. The residue at position 244 (lysine 244) is an N6-succinyllysine; alternate. Position 267 is an N6-acetyllysine (lysine 267). Position 277 is an N6-succinyllysine (lysine 277). Histidine 292 provides a ligand contact to thiamine diphosphate. Phosphoserine; by PDK1, PDK2, PDK3 and PDK4 is present on serine 293. The residue at position 295 (serine 295) is a Phosphoserine. Serine 300 carries the phosphoserine; by PDK1, PDK2, PDK3 and PDK4 modification. Tyrosine 301 bears the Phosphotyrosine mark. At lysine 313 the chain carries N6-acetyllysine; alternate. N6-succinyllysine; alternate is present on lysine 313. Lysine 321 and lysine 336 each carry N6-acetyllysine. Lysine 385 bears the N6-succinyllysine mark.

In terms of assembly, heterotetramer of two PDHA1 and two PDHB subunits. The heterotetramer interacts with DLAT, and is part of the multimeric pyruvate dehydrogenase complex that contains multiple copies of pyruvate dehydrogenase (E1), dihydrolipoamide acetyltransferase (DLAT, E2) and lipoamide dehydrogenase (DLD, E3). These subunits are bound to an inner core composed of about 48 DLAT and 12 PDHX molecules. Requires thiamine diphosphate as cofactor. It depends on Mg(2+) as a cofactor. Phosphorylation at Ser-232, Ser-293 and Ser-300 by PDK family kinases inactivates the enzyme; for this phosphorylation at a single site is sufficient. Phosphorylation at Ser-293 interferes with access to active site, and thereby inactivates the enzyme. Dephosphorylation at all three sites, i.e. at Ser-232, Ser-293 and Ser-300, is required for reactivation. Post-translationally, acetylation alters the phosphorylation pattern. Deacetylated by SIRT3.

Its subcellular location is the mitochondrion matrix. It carries out the reaction N(6)-[(R)-lipoyl]-L-lysyl-[protein] + pyruvate + H(+) = N(6)-[(R)-S(8)-acetyldihydrolipoyl]-L-lysyl-[protein] + CO2. Pyruvate dehydrogenase activity is inhibited by phosphorylation of PDHA1; it is reactivated by dephosphorylation. In terms of biological role, the pyruvate dehydrogenase complex catalyzes the overall conversion of pyruvate to acetyl-CoA and CO(2), and thereby links the glycolytic pathway to the tricarboxylic cycle. This chain is Pyruvate dehydrogenase E1 component subunit alpha, somatic form, mitochondrial (PDHA1), found in Bos taurus (Bovine).